Here is a 47-residue protein sequence, read N- to C-terminus: MIQPQTHLNVADNSGARELMCIRILGASNRRYAYIGDIVVAVIKQAV.

This sequence belongs to the universal ribosomal protein uL14 family. Part of the 50S ribosomal subunit.

The protein localises to the plastid. Its subcellular location is the chloroplast. In terms of biological role, binds to 23S rRNA. This chain is Large ribosomal subunit protein uL14c (rpl14), found in Vigna unguiculata (Cowpea).